The primary structure comprises 114 residues: Iron-sulfur cluster insertion protein ErpA (114 aa).

Residues Cys42, Cys106, and Cys108 each contribute to the iron-sulfur cluster site.

Belongs to the HesB/IscA family. In terms of assembly, homodimer. The cofactor is iron-sulfur cluster.

In terms of biological role, required for insertion of 4Fe-4S clusters for at least IspG. This chain is Iron-sulfur cluster insertion protein ErpA, found in Enterobacter sp. (strain 638).